The following is a 498-amino-acid chain: ATP synthase subunit beta, chloroplastic (498 aa).

172-179 (GGAGVGKT) contributes to the ATP binding site.

This sequence belongs to the ATPase alpha/beta chains family. As to quaternary structure, F-type ATPases have 2 components, CF(1) - the catalytic core - and CF(0) - the membrane proton channel. CF(1) has five subunits: alpha(3), beta(3), gamma(1), delta(1), epsilon(1). CF(0) has four main subunits: a(1), b(1), b'(1) and c(9-12).

It is found in the plastid. The protein resides in the chloroplast thylakoid membrane. It catalyses the reaction ATP + H2O + 4 H(+)(in) = ADP + phosphate + 5 H(+)(out). Produces ATP from ADP in the presence of a proton gradient across the membrane. The catalytic sites are hosted primarily by the beta subunits. The chain is ATP synthase subunit beta, chloroplastic from Pelargonium hortorum (Common geranium).